Consider the following 230-residue polypeptide: Triosephosphate isomerase (230 aa).

Substrate is bound at residue 9–11; that stretch reads NYK. Histidine 93 acts as the Electrophile in catalysis. Residue glutamate 141 is the Proton acceptor of the active site. Substrate-binding positions include isoleucine 146, glycine 180, and 201-202; that span reads AS.

It belongs to the triosephosphate isomerase family. As to quaternary structure, homotetramer; dimer of dimers.

Its subcellular location is the cytoplasm. It carries out the reaction D-glyceraldehyde 3-phosphate = dihydroxyacetone phosphate. It participates in carbohydrate biosynthesis; gluconeogenesis. Its pathway is carbohydrate degradation; glycolysis; D-glyceraldehyde 3-phosphate from glycerone phosphate: step 1/1. Its function is as follows. Involved in the gluconeogenesis. Catalyzes stereospecifically the conversion of dihydroxyacetone phosphate (DHAP) to D-glyceraldehyde-3-phosphate (G3P). The sequence is that of Triosephosphate isomerase from Sulfolobus acidocaldarius (strain ATCC 33909 / DSM 639 / JCM 8929 / NBRC 15157 / NCIMB 11770).